A 1936-amino-acid polypeptide reads, in one-letter code: Potassium channel K1 (1936 aa).

The next 6 helical transmembrane spans lie at 175 to 195, 598 to 618, 643 to 663, 670 to 690, 701 to 721, and 734 to 754; these read IIIL…YILL, VWII…LWAA, GYIE…GLYF, YIFS…SFIM, TYWF…AEST, and IIII…SGIM. Positions 772-788 form an intramembrane region, pore-forming; that stretch reads FVYFGVITMSTVGYGDY. Residues 791–811 form a helical membrane-spanning segment; that stretch reads VTPAGKCLTMFIIVTCFTFVG. A coiled-coil region spans residues 1141 to 1185; sequence DTSSMINYKSKSRVNYKMVKGTKNEFIRNQNYNINSIYYANNDNM.

It localises to the membrane. The enzyme catalyses K(+)(in) = K(+)(out). With respect to regulation, partially inhibited by Ba(2+) and quinine. Probably insensitive to tetraethylammonium (TEA). Functionally, likely a predominant potassium channel in the erythrocytic stages of parasites. Mediates transmembrane potassium transport. Required for the development of oocysts in the mosquito midgut. In Plasmodium berghei (strain Anka), this protein is Potassium channel K1.